Reading from the N-terminus, the 449-residue chain is POU domain, class 3, transcription factor 1 (449 aa).

Disordered regions lie at residues 1–22, 76–108, 132–152, 184–251, and 393–449; these read MATTAQYLPRGPGGGAGGTGPL, GGGGGDWAGGPHLEHGKAGGGGTGRADDGGGGG, AHHLGPAMSPSPGAGGGHQPQ, GLHH…PSSD, and KRMT…GSVQ. Gly residues-rich tracts occupy residues 11-20 and 93-108; these read GPGGGAGGTG and AGGGGTGRADDGGGGG. Residues 132 to 143 show a composition bias toward low complexity; the sequence is AHHLGPAMSPSP. A compositionally biased stretch (basic and acidic residues) spans 188-197; that stretch reads ALHEDGHEAQ. The span at 218-230 shows a compositional bias: low complexity; the sequence is AGGLHAAAAHLHP. Residues 245–319 form the POU-specific domain; the sequence is EDAPSSDDLE…LLNKWLEETD (75 aa). The segment at residues 337–396 is a DNA-binding region (homeobox); the sequence is KRKKRTSIEVGVKGALESHFLKCPKPSAHEITGLADSLQLEKEVVRVWFCNRRQKEKRMT. Positions 425–434 are enriched in pro residues; the sequence is PSAPPPPPPA.

This sequence belongs to the POU transcription factor family. Class-3 subfamily.

Its subcellular location is the nucleus. Functionally, transcription factor that binds to the octamer motif (5'-ATTTGCAT-3'). Acts as a transcriptional activator when binding cooperatively with SOX4, SOX11, or SOX12 to gene promoters. Acts as a transcriptional repressor of myelin-specific genes. The polypeptide is POU domain, class 3, transcription factor 1 (Pou3f1) (Mus musculus (Mouse)).